Here is a 170-residue protein sequence, read N- to C-terminus: CDP-archaeol synthase (170 aa).

5 consecutive transmembrane segments (helical) span residues 6–26 (LLWA…PVLV), 53–73 (GLIG…FITP), 83–103 (LLLA…GSFF), 114–134 (PAIG…AYPV), and 140–160 (GQII…NYFA).

Belongs to the CDP-archaeol synthase family. Requires Mg(2+) as cofactor.

It is found in the cell membrane. It carries out the reaction 2,3-bis-O-(geranylgeranyl)-sn-glycerol 1-phosphate + CTP + H(+) = CDP-2,3-bis-O-(geranylgeranyl)-sn-glycerol + diphosphate. It functions in the pathway membrane lipid metabolism; glycerophospholipid metabolism. Its function is as follows. Catalyzes the formation of CDP-2,3-bis-(O-geranylgeranyl)-sn-glycerol (CDP-archaeol) from 2,3-bis-(O-geranylgeranyl)-sn-glycerol 1-phosphate (DGGGP) and CTP. This reaction is the third ether-bond-formation step in the biosynthesis of archaeal membrane lipids. In Thermococcus onnurineus (strain NA1), this protein is CDP-archaeol synthase.